Consider the following 382-residue polypeptide: MGIKGLNAIISEHVPSAIRKSDIKSFFGRKVAIDASMSLYQFLIAVRQQDGGQLTNEAGETTSHLMGMFYRTLRMIDNGIKPCYVFDGKPPDLKSHELTKRSSRRVETEKKLAEATTELEKMKQERRLVKVSKEHNEEAQKLLGLMGIPYIIAPTEAEAQCAELAKKGKVYAAASEDMDTLCYRTPFLLRHLTFSEAKKEPIHEIDTELVLRGLDLTIEQFVDLCIMLGCDYCESIRGVGPVTALKLIKTHGSIEKIVEFIESGESNNTKWKIPEDWPYKQARMLFLDPEVIDGNEINLKWSPPKEKELIEYLCDDKKFSEERVKSGISRLKKGLKSGIQGRLDGFFQVVPKTKEQLAAAAKRAQENKKLNKNKNKVTKGRR.

An N-domain region spans residues 1–105; it reads MGIKGLNAII…HELTKRSSRR (105 aa). Asp-34 contributes to the Mg(2+) binding site. Positions 47 and 71 each coordinate DNA. Mg(2+) contacts are provided by Asp-87, Glu-156, Glu-158, Asp-177, and Asp-179. The tract at residues 120–251 is I-domain; sequence EKMKQERRLV…VTALKLIKTH (132 aa). Position 156 (Glu-156) interacts with DNA. Residues Gly-229 and Asp-231 each contribute to the DNA site. A Mg(2+)-binding site is contributed by Asp-231. An interaction with PCNA region spans residues 339 to 347; the sequence is IQGRLDGFF. Positions 358-382 are disordered; the sequence is AAAAKRAQENKKLNKNKNKVTKGRR. The segment covering 370-382 has biased composition (basic residues); it reads LNKNKNKVTKGRR.

The protein belongs to the XPG/RAD2 endonuclease family. FEN1 subfamily. Interacts with PCNA. Three molecules of RAD27 bind to one PCNA trimer with each molecule binding to one PCNA monomer. PCNA stimulates the nuclease activity without altering cleavage specificity. It depends on Mg(2+) as a cofactor. Post-translationally, phosphorylated. Phosphorylation upon DNA damage induces relocalization to the nuclear plasma.

The protein localises to the nucleus. Its subcellular location is the nucleolus. It is found in the nucleoplasm. The protein resides in the mitochondrion. In terms of biological role, structure-specific nuclease with 5'-flap endonuclease and 5'-3' exonuclease activities involved in DNA replication and repair. During DNA replication, cleaves the 5'-overhanging flap structure that is generated by displacement synthesis when DNA polymerase encounters the 5'-end of a downstream Okazaki fragment. It enters the flap from the 5'-end and then tracks to cleave the flap base, leaving a nick for ligation. Also involved in the long patch base excision repair (LP-BER) pathway, by cleaving within the apurinic/apyrimidinic (AP) site-terminated flap. Acts as a genome stabilization factor that prevents flaps from equilibrating into structures that lead to duplications and deletions. Also possesses 5'-3' exonuclease activity on nicked or gapped double-stranded DNA, and exhibits RNase H activity. Also involved in replication and repair of rDNA and in repairing mitochondrial DNA. The polypeptide is Flap endonuclease 1 (Saccharomyces cerevisiae (strain YJM789) (Baker's yeast)).